A 205-amino-acid polypeptide reads, in one-letter code: Adenylyl-sulfate kinase (205 aa).

31-38 (GLSGAGKS) contributes to the ATP binding site. Ser-105 acts as the Phosphoserine intermediate in catalysis.

The protein belongs to the APS kinase family.

It carries out the reaction adenosine 5'-phosphosulfate + ATP = 3'-phosphoadenylyl sulfate + ADP + H(+). It participates in sulfur metabolism; hydrogen sulfide biosynthesis; sulfite from sulfate: step 2/3. Functionally, catalyzes the synthesis of activated sulfate. The polypeptide is Adenylyl-sulfate kinase (Shewanella oneidensis (strain ATCC 700550 / JCM 31522 / CIP 106686 / LMG 19005 / NCIMB 14063 / MR-1)).